Consider the following 258-residue polypeptide: Imidazole glycerol phosphate synthase subunit HisF (258 aa).

Catalysis depends on residues aspartate 11 and aspartate 130.

The protein belongs to the HisA/HisF family. As to quaternary structure, heterodimer of HisH and HisF.

Its subcellular location is the cytoplasm. The catalysed reaction is 5-[(5-phospho-1-deoxy-D-ribulos-1-ylimino)methylamino]-1-(5-phospho-beta-D-ribosyl)imidazole-4-carboxamide + L-glutamine = D-erythro-1-(imidazol-4-yl)glycerol 3-phosphate + 5-amino-1-(5-phospho-beta-D-ribosyl)imidazole-4-carboxamide + L-glutamate + H(+). It participates in amino-acid biosynthesis; L-histidine biosynthesis; L-histidine from 5-phospho-alpha-D-ribose 1-diphosphate: step 5/9. In terms of biological role, IGPS catalyzes the conversion of PRFAR and glutamine to IGP, AICAR and glutamate. The HisF subunit catalyzes the cyclization activity that produces IGP and AICAR from PRFAR using the ammonia provided by the HisH subunit. The chain is Imidazole glycerol phosphate synthase subunit HisF from Rhodospirillum centenum (strain ATCC 51521 / SW).